A 930-amino-acid polypeptide reads, in one-letter code: Probable outer membrane protein pmp8 (930 aa).

An N-terminal signal peptide occupies residues 1–26 (MKIPLHKLLISSTLVTPILLSIATYG). The region spanning 636–930 (SIYQQRGLWA…NVDCGLRYSF (295 aa)) is the Autotransporter domain.

Belongs to the PMP outer membrane protein family.

The protein resides in the secreted. Its subcellular location is the cell wall. It localises to the cell outer membrane. This Chlamydia pneumoniae (Chlamydophila pneumoniae) protein is Probable outer membrane protein pmp8 (pmp8).